The sequence spans 239 residues: Ribose-5-phosphate isomerase A (239 aa).

Substrate contacts are provided by residues 40–43 (SGST), 96–99 (DGAD), and 110–113 (KGGG). The Proton acceptor role is filled by Glu119. Lys137 serves as a coordination point for substrate.

The protein belongs to the ribose 5-phosphate isomerase family. As to quaternary structure, homodimer.

The enzyme catalyses aldehydo-D-ribose 5-phosphate = D-ribulose 5-phosphate. Its pathway is carbohydrate degradation; pentose phosphate pathway; D-ribose 5-phosphate from D-ribulose 5-phosphate (non-oxidative stage): step 1/1. In terms of biological role, catalyzes the reversible conversion of ribose-5-phosphate to ribulose 5-phosphate. The protein is Ribose-5-phosphate isomerase A of Methanococcus maripaludis (strain DSM 14266 / JCM 13030 / NBRC 101832 / S2 / LL).